A 346-amino-acid chain; its full sequence is 2,5-dichlorohydroquinone reductive dechlorinase (346 aa).

In terms of domain architecture, GST N-terminal spans 43 to 154; the sequence is PRFELFHFVF…YLCDALSGGT (112 aa). The 147-residue stretch at 189 to 335 folds into the GST C-terminal domain; it reads DRRPESMQAV…AIIQWPGHPP (147 aa).

Belongs to the GST superfamily.

It catalyses the reaction 2,5-dichlorohydroquinone + 2 glutathione = chlorohydroquinone + glutathione disulfide + chloride + H(+). The enzyme catalyses chlorohydroquinone + 2 glutathione = hydroquinone + glutathione disulfide + chloride + H(+). Its pathway is xenobiotic degradation; gamma-hexachlorocyclohexane degradation. Its function is as follows. Catalyzes the degradation of 2,5-dichlorohydroquinone (2,5-DCHQ) into hydroquinone (HQ) via chlorohydroquinone (CHQ). This is 2,5-dichlorohydroquinone reductive dechlorinase from Sphingobium indicum (strain DSM 16412 / CCM 7286 / MTCC 6364 / B90A).